We begin with the raw amino-acid sequence, 1796 residues long: U3 small nucleolar RNA-associated protein 10 (1796 aa).

12 HEAT repeats span residues 586 to 623 (LDLQAMIPYCVAALSDPAKKVRQAAADLITVLSKSNAE), 656 to 692 (LLQEIIVPALEESVLDEEHISNVLRSHLQSTKDSATG), 861 to 898 (DLTTNILNAFLESLQDIPKITTDSPATKRRRTSSSDHS), 983 to 1021 (DTSVGHGDVLVQCIQKSSSPAVQNSALLLVASLANTAPD), 1052 to 1089 (QTIKEVIPPLVETFRKSRRNLVTSAAELLSSFVIAYEH), 1161 to 1198 (QPKPTLAATLFNRNTDDDQDLHKTALKELTLLPKVLSS), 1258 to 1295 (LSIGEFIKAVENLLDRPSISLRQKVLRTLEVRVDQESN), 1302 to 1340 (TVLLAFLPQLTAVIRDSDDIAYKHTAVACVDKIAEKYGK), 1344 to 1383 (EAVAAAATTIAGDCCLGQPDKRLRVMALLCLASLVDVLQD), 1492 to 1529 (SAVEEYLKLLATVLDKHPSTIIAKHISTLSTIFLSALD), 1711 to 1748 (DHRKELNAAVLRRLRSPSASVRLAAVRCEQSLTDTLGE), and 1752 to 1789 (EMLSEMLPYISELQDDDDEDVEKETHRWITKIEAILGE). The disordered stretch occupies residues 881–901 (TTDSPATKRRRTSSSDHSRGV).

It belongs to the HEATR1/UTP10 family. As to quaternary structure, component of the ribosomal small subunit (SSU) processome.

It localises to the nucleus. The protein localises to the nucleolus. Functionally, involved in nucleolar processing of pre-18S ribosomal RNA. Involved in ribosome biosynthesis. This Pyricularia oryzae (strain 70-15 / ATCC MYA-4617 / FGSC 8958) (Rice blast fungus) protein is U3 small nucleolar RNA-associated protein 10.